Reading from the N-terminus, the 422-residue chain is Glutamate-1-semialdehyde 2,1-aminomutase (422 aa).

Lysine 258 is subject to N6-(pyridoxal phosphate)lysine.

This sequence belongs to the class-III pyridoxal-phosphate-dependent aminotransferase family. HemL subfamily. In terms of assembly, homodimer. Pyridoxal 5'-phosphate serves as cofactor.

It is found in the cytoplasm. It carries out the reaction (S)-4-amino-5-oxopentanoate = 5-aminolevulinate. It participates in porphyrin-containing compound metabolism; protoporphyrin-IX biosynthesis; 5-aminolevulinate from L-glutamyl-tRNA(Glu): step 2/2. This is Glutamate-1-semialdehyde 2,1-aminomutase from Chlamydia trachomatis serovar D (strain ATCC VR-885 / DSM 19411 / UW-3/Cx).